The following is a 225-amino-acid chain: Uridylate kinase (225 aa).

9–10 (GS) is a binding site for ATP. Gly-46 provides a ligand contact to UMP. ATP contacts are provided by Gly-47 and Arg-51. UMP contacts are provided by residues Asp-67 and 115–121 (THPAHTT). ATP-binding residues include Thr-141, Asn-142, Tyr-147, and Asp-150.

Belongs to the UMP kinase family. In terms of assembly, homohexamer.

It localises to the cytoplasm. It carries out the reaction UMP + ATP = UDP + ADP. Its pathway is pyrimidine metabolism; CTP biosynthesis via de novo pathway; UDP from UMP (UMPK route): step 1/1. With respect to regulation, inhibited by UTP. Functionally, catalyzes the reversible phosphorylation of UMP to UDP. This is Uridylate kinase from Methanococcus aeolicus (strain ATCC BAA-1280 / DSM 17508 / OCM 812 / Nankai-3).